A 144-amino-acid chain; its full sequence is Putative pre-16S rRNA nuclease (144 aa).

The protein belongs to the YqgF nuclease family.

Its subcellular location is the cytoplasm. Functionally, could be a nuclease involved in processing of the 5'-end of pre-16S rRNA. This chain is Putative pre-16S rRNA nuclease, found in Symbiobacterium thermophilum (strain DSM 24528 / JCM 14929 / IAM 14863 / T).